The chain runs to 490 residues: Cobyric acid synthase (490 aa).

The region spanning 252-439 (RLKVVVPVLP…LHGLFESTAA (188 aa)) is the GATase cobBQ-type domain. Catalysis depends on Cys333, which acts as the Nucleophile. The active site involves His431.

It belongs to the CobB/CobQ family. CobQ subfamily.

The protein operates within cofactor biosynthesis; adenosylcobalamin biosynthesis. In terms of biological role, catalyzes amidations at positions B, D, E, and G on adenosylcobyrinic A,C-diamide. NH(2) groups are provided by glutamine, and one molecule of ATP is hydrogenolyzed for each amidation. This is Cobyric acid synthase from Pseudomonas paraeruginosa (strain DSM 24068 / PA7) (Pseudomonas aeruginosa (strain PA7)).